A 214-amino-acid chain; its full sequence is Pyridoxine/pyridoxamine 5'-phosphate oxidase (214 aa).

Residues 8-11 (RINY) and lysine 66 each bind substrate. Residues 61–66 (RIVLVK), 76–77 (FT), arginine 82, lysine 83, and glutamine 105 each bind FMN. Positions 123, 127, and 131 each coordinate substrate. FMN is bound by residues 140–141 (QS) and tryptophan 184. 190–192 (RLH) serves as a coordination point for substrate. Arginine 194 provides a ligand contact to FMN.

Belongs to the pyridoxamine 5'-phosphate oxidase family. As to quaternary structure, homodimer. The cofactor is FMN.

It carries out the reaction pyridoxamine 5'-phosphate + O2 + H2O = pyridoxal 5'-phosphate + H2O2 + NH4(+). The catalysed reaction is pyridoxine 5'-phosphate + O2 = pyridoxal 5'-phosphate + H2O2. The protein operates within cofactor metabolism; pyridoxal 5'-phosphate salvage; pyridoxal 5'-phosphate from pyridoxamine 5'-phosphate: step 1/1. It functions in the pathway cofactor metabolism; pyridoxal 5'-phosphate salvage; pyridoxal 5'-phosphate from pyridoxine 5'-phosphate: step 1/1. Functionally, catalyzes the oxidation of either pyridoxine 5'-phosphate (PNP) or pyridoxamine 5'-phosphate (PMP) into pyridoxal 5'-phosphate (PLP). This Burkholderia multivorans (strain ATCC 17616 / 249) protein is Pyridoxine/pyridoxamine 5'-phosphate oxidase.